A 642-amino-acid polypeptide reads, in one-letter code: Mini-chromosome maintenance complex-binding protein (642 aa).

Over residues 151 to 161 the composition is skewed to polar residues; the sequence is ARVSPSTSYTP. Positions 151–188 are disordered; the sequence is ARVSPSTSYTPSRHKRSYEDDEDMDLQPNKQKDQHMGA. Position 154 is a phosphoserine (serine 154). Threonine 160 bears the Phosphothreonine mark. A phosphoserine mark is found at serine 167 and serine 298.

Belongs to the MCMBP family. As to quaternary structure, interacts with the MCM complex: associates with the MCM3-7 complex which lacks MCM2, while it does not interact with the MCM complex when MCM2 is present (MCM2-7 complex). Interacts with the RPA complex, when composed of all RPA1, RPA2 and RPA3 components, but not with RPA1 or RPA2 alone.

It localises to the nucleus. Its function is as follows. Associated component of the MCM complex that acts as a regulator of DNA replication. Binds to the MCM complex during late S phase and promotes the disassembly of the MCM complex from chromatin, thereby acting as a key regulator of pre-replication complex (pre-RC) unloading from replicated DNA. Can dissociate the MCM complex without addition of ATP; probably acts by destabilizing interactions of each individual subunits of the MCM complex. Required for sister chromatid cohesion. This Bos taurus (Bovine) protein is Mini-chromosome maintenance complex-binding protein (MCMBP).